We begin with the raw amino-acid sequence, 246 residues long: Mast cell protease 1 (246 aa).

The signal sequence occupies residues 1-18 (MQALLFLLALLWPPEAGA). A propeptide spans 19–20 (EE) (activation peptide). The Peptidase S1 domain maps to 21–244 (IIGGVESKPH…YVPWINLVIR (224 aa)). Cys-50 and Cys-66 are disulfide-bonded. Active-site charge relay system residues include His-65 and Asp-109. Disulfide bonds link Cys-143–Cys-208 and Cys-174–Cys-187. The active-site Charge relay system is the Ser-202.

Belongs to the peptidase S1 family. Granzyme subfamily.

The sequence is that of Mast cell protease 1 from Meriones unguiculatus (Mongolian jird).